A 624-amino-acid polypeptide reads, in one-letter code: MQPDPRPSGAGACCRFLPLQSQCPEGAGDAVMYASTECKAEVTPSQHGNRTFSYTLEDHTKQAFGIMNELRLSQQLCDVTLQVKYQDAPAAQFMAHKVVLASSSPVFKAMFTNGLREQGMEVVSIEGIHPKVMERLIEFAYTASISMGEKCVLHVMNGAVMYQIDSVVRACSDFLVQQLDPSNAIGIANFAEQIGCVELHQRAREYIYMHFGEVAKQEEFFNLSHCQLVTLISRDDLNVRCESEVFHACINWVKYDCEQRRFYVQALLRAVRCHSLTPNFLQMQLQKCEILQSDSRCKDYLVKIFEELTLHKPTQVMPCRAPKVGRLIYTAGGYFRQSLSYLEAYNPSDGTWLRLADLQVPRSGLAGCVVGGLLYAVGGRNNSPDGNTDSSALDCYNPMTNQWSPCAPMSVPRNRIGVGVIDGHIYAVGGSHGCIHHNSVERYEPERDEWHLVAPMLTRRIGVGVAVLNRLLYAVGGFDGTNRLNSAECYYPERNEWRMITAMNTIRSGAGVCVLHNCIYAAGGYDGQDQLNSVERYDVETETWTFVAPMKHRRSALGITVHQGRIYVLGGYDGHTFLDSVECYDPDTDTWSEVTRMTSGRSGVGVAVTMEPCRKQIDQQNCTC.

Cys-38 bears the S-(2-succinyl)cysteine mark. Residues 77–149 form the BTB domain; the sequence is CDVTLQVKYQ…AYTASISMGE (73 aa). Residue Arg-135 forms an N5-[4-(S-L-cysteinyl)-5-methyl-1H-imidazol-2-yl]-L-ornithine (Arg-Cys) (interchain with C-151 in KEAP1) linkage. Cys-151 bears the S-(2,3-dicarboxypropyl)cysteine; alternate mark. Cys-151 carries the post-translational modification S-(2-succinyl)cysteine; alternate. Cys-151 carries the post-translational modification S-nitrosocysteine; alternate. Cys-151 is covalently cross-linked (N5-[4-(S-L-cysteinyl)-5-methyl-1H-imidazol-2-yl]-L-ornithine (Cys-Arg) (interchain with R-135 in KEAP1)). A BACK domain is found at 184-286; sequence AIGIANFAEQ…TPNFLQMQLQ (103 aa). S-(2-succinyl)cysteine is present on Cys-241. An S-(2,3-dicarboxypropyl)cysteine mark is found at Cys-257 and Cys-273. Cys-288 bears the S-(2,3-dicarboxypropyl)cysteine; alternate mark. Cys-288 is subject to S-(2-succinyl)cysteine; alternate. Cys-319 carries the S-(2-succinyl)cysteine modification. Kelch repeat units follow at residues 327-372, 373-423, 424-470, 471-517, 518-564, and 565-611; these read LIYT…VVGG, LLYA…VIDG, HIYA…VLNR, LLYA…VLHN, CIYA…VHQG, and RIYV…VTME. Cys-434 bears the S-cGMP-cysteine mark. Position 613 is an S-(2-succinyl)cysteine (Cys-613).

Belongs to the KEAP1 family. In terms of assembly, component of the BCR(KEAP1) E3 ubiquitin ligase complex, at least composed of 2 molecules of CUL3, 2 molecules of KEAP1, and RBX1. Interacts with NFE2L2/NRF2; the interaction is direct. Forms a ternary complex with NFE2L2/NRF2 and PGAM5. Interacts with (phosphorylated) SQSTM1/p62; the interaction is direct and inactivates the BCR(KEAP1) complex by sequestering it in inclusion bodies, promoting its degradation. Interacts with NFE2L1. Interacts with BPTF and PTMA. Interacts with MAP1LC3B. Interacts indirectly with ENC1. Interacts with SESN1 and SESN2. Interacts with HSP90AA1 and HSP90AB1. Interacts with PGCKA1; this interaction prevents the ubiquitination of KEAP1 by TRIM25, thus protecting KEAP1 from degradation. As to quaternary structure, (Microbial infection) Interacts with ebolavirus protein VP24; this interaction activates transcription factor NFE2L2/NRF2 by blocking its interaction with KEAP1. In terms of processing, non-enzymatic covalent modifications of reactive cysteines by electrophile metabolites inactivate the BCR(KEAP1) complex. Accumulation of fumarate promotes the formation of cysteine S-succination (S-(2-succinyl)cysteine), leading to inactivate the BCR(KEAP1) complex and promote NFE2L2/NRF2 nuclear accumulation and activation. Nitric oxide-dependent 8-Nitro-cGMP formation promotes cysteine guanylation (S-cGMP-cysteine), leading to NFE2L2/NRF2 nuclear accumulation and activation. Itaconate, an anti-inflammatory metabolite generated in response to lipopolysaccharide, alkylates cysteines, activating NFE2L2/NRF2. Methylglyoxal, a reactive metabolite that accumulates when the glycolytic enzyme PGK1 is inhibited, promotes formation of a methylimidazole cross-link between proximal Cys-151 and Arg-135 on another KEAP1 molecule, resulting in an inactive dimer that inactivates the BCR(KEAP1) complex. Degraded via a proteasomal-independent process during selective autophagy: interaction with phosphorylated SQSTM1/p62 sequesters KEAP1 in inclusion bodies, leading to its degradation. Post-translationally, auto-ubiquitinated by the BCR(KEAP1) complex. Quinone-induced oxidative stress, but not sulforaphane, increases its ubiquitination. Ubiquitination and subsequent degradation is most pronounced following prolonged exposure of cells to oxidative stress, particularly in glutathione-deficient cells that are highly susceptible to oxidative stress. Deubiquitinated by USP25; leading to stabilization. Ubiquitinated by TRIM25; leading to degradation upon ER stress. In terms of tissue distribution, broadly expressed, with highest levels in skeletal muscle.

The protein localises to the cytoplasm. Its subcellular location is the nucleus. It functions in the pathway protein modification; protein ubiquitination. With respect to regulation, ubiquitin ligase activity of the BCR(KEAP1) complex is inhibited by oxidative stress and electrophile metabolites such as sulforaphane. Electrophile metabolites react with reactive cysteine residues in KEAP1 and trigger non-enzymatic covalent modifications of these cysteine residues, leading to inactivate the ubiquitin ligase activity of the BCR(KEAP1) complex. Selective autophagy also inactivates the BCR(KEAP1) complex via interaction between KEAP1 and SQSTM1/p62, which sequesters the complex in inclusion bodies and promotes its degradation. In terms of biological role, substrate-specific adapter of a BCR (BTB-CUL3-RBX1) E3 ubiquitin ligase complex that regulates the response to oxidative stress by targeting NFE2L2/NRF2 for ubiquitination. KEAP1 acts as a key sensor of oxidative and electrophilic stress: in normal conditions, the BCR(KEAP1) complex mediates ubiquitination and degradation of NFE2L2/NRF2, a transcription factor regulating expression of many cytoprotective genes. In response to oxidative stress, different electrophile metabolites trigger non-enzymatic covalent modifications of highly reactive cysteine residues in KEAP1, leading to inactivate the ubiquitin ligase activity of the BCR(KEAP1) complex, promoting NFE2L2/NRF2 nuclear accumulation and expression of phase II detoxifying enzymes. In response to selective autophagy, KEAP1 is sequestered in inclusion bodies following its interaction with SQSTM1/p62, leading to inactivation of the BCR(KEAP1) complex and activation of NFE2L2/NRF2. The BCR(KEAP1) complex also mediates ubiquitination of SQSTM1/p62, increasing SQSTM1/p62 sequestering activity and degradation. The BCR(KEAP1) complex also targets BPTF and PGAM5 for ubiquitination and degradation by the proteasome. The sequence is that of Kelch-like ECH-associated protein 1 from Homo sapiens (Human).